The following is a 122-amino-acid chain: Large ribosomal subunit protein uL14 (122 aa).

It belongs to the universal ribosomal protein uL14 family. Part of the 50S ribosomal subunit. Forms a cluster with proteins L3 and L19. In the 70S ribosome, L14 and L19 interact and together make contacts with the 16S rRNA in bridges B5 and B8.

Binds to 23S rRNA. Forms part of two intersubunit bridges in the 70S ribosome. This Chlamydia abortus (strain DSM 27085 / S26/3) (Chlamydophila abortus) protein is Large ribosomal subunit protein uL14.